The sequence spans 357 residues: Probable RNA methyltransferase Daro_1157 (357 aa).

E91 (proton acceptor) is an active-site residue. One can recognise a Radical SAM core domain in the interval 94–320 (LLPRDGLCIS…TTVRNSAGQD (227 aa)). C101 and C325 are joined by a disulfide. [4Fe-4S] cluster-binding residues include C108, C112, and C115. Residues 153 to 154 (GE), S183, 206 to 208 (SLH), and N282 each bind S-adenosyl-L-methionine. The S-methylcysteine intermediate role is filled by C325.

The protein belongs to the radical SAM superfamily. RlmN family. [4Fe-4S] cluster is required as a cofactor.

Its subcellular location is the cytoplasm. The protein is Probable RNA methyltransferase Daro_1157 of Dechloromonas aromatica (strain RCB).